We begin with the raw amino-acid sequence, 181 residues long: Transcription antitermination protein NusB (181 aa).

The tract at residues 1-36 is disordered; that stretch reads MTEDNNKAAGAKPRPARQVRTGLTSTGARKASAKSN.

This sequence belongs to the NusB family.

Its function is as follows. Involved in transcription antitermination. Required for transcription of ribosomal RNA (rRNA) genes. Binds specifically to the boxA antiterminator sequence of the ribosomal RNA (rrn) operons. The polypeptide is Transcription antitermination protein NusB (Variovorax paradoxus (strain S110)).